Here is a 259-residue protein sequence, read N- to C-terminus: Probable kinetochore protein spc25 (259 aa).

Positions 1–20 (MSRKSVMSSTFEPSLSTSRQ) are enriched in polar residues. Positions 1 to 25 (MSRKSVMSSTFEPSLSTSRQPLGPS) are disordered. Positions 59-162 (RKRVLEERNQ…HAAQLEAQAR (104 aa)) form a coiled coil.

This sequence belongs to the SPC25 family. As to quaternary structure, component of the NDC80 complex, which consists of kpr-1/ndc80, kpr-2/nuf2, kpr-3/spc24 and kpr-4/spc25.

It is found in the nucleus. It localises to the chromosome. Its subcellular location is the centromere. The protein resides in the kinetochore. Acts as a component of the essential kinetochore-associated NDC80 complex, which is required for chromosome segregation and spindle checkpoint activity. The chain is Probable kinetochore protein spc25 (kpr-4) from Neurospora crassa (strain ATCC 24698 / 74-OR23-1A / CBS 708.71 / DSM 1257 / FGSC 987).